The following is a 409-amino-acid chain: Elongation factor 1-gamma (409 aa).

Residues 2–81 (SVGTVYGKIG…YLASLNKTRA (80 aa)) enclose the GST N-terminal domain. Residues 86-212 (TAEEKAKVLQ…EPLKFIDQPL (127 aa)) form the GST C-terminal domain. Residues 219–248 (NKEAAPAKKAEKKKDEKKKNAPKPQAERPA) show a composition bias toward basic and acidic residues. The interval 219 to 261 (NKEAAPAKKAEKKKDEKKKNAPKPQAERPAKPPKHPLASAPNG) is disordered. Positions 251–409 (PKHPLASAPN…REVADGKVCK (159 aa)) constitute an EF-1-gamma C-terminal domain.

In terms of assembly, EF-1 is composed of four subunits: alpha, beta, delta, and gamma.

In terms of biological role, probably plays a role in anchoring the complex to other cellular components. This chain is Elongation factor 1-gamma (tef3), found in Schizosaccharomyces pombe (strain 972 / ATCC 24843) (Fission yeast).